A 334-amino-acid chain; its full sequence is Glycerol-3-phosphate dehydrogenase [NAD(P)+] (334 aa).

NADPH contacts are provided by Ser14, Tyr15, His35, and Lys109. Sn-glycerol 3-phosphate contacts are provided by Lys109, Gly138, and Thr140. Residue Ala142 coordinates NADPH. The sn-glycerol 3-phosphate site is built by Lys194, Asp247, Ser257, Arg258, and Asn259. Lys194 (proton acceptor) is an active-site residue. Arg258 is an NADPH binding site. Residues Val282 and Glu284 each coordinate NADPH.

This sequence belongs to the NAD-dependent glycerol-3-phosphate dehydrogenase family.

It localises to the cytoplasm. The enzyme catalyses sn-glycerol 3-phosphate + NAD(+) = dihydroxyacetone phosphate + NADH + H(+). The catalysed reaction is sn-glycerol 3-phosphate + NADP(+) = dihydroxyacetone phosphate + NADPH + H(+). The protein operates within membrane lipid metabolism; glycerophospholipid metabolism. Its function is as follows. Catalyzes the reduction of the glycolytic intermediate dihydroxyacetone phosphate (DHAP) to sn-glycerol 3-phosphate (G3P), the key precursor for phospholipid synthesis. This is Glycerol-3-phosphate dehydrogenase [NAD(P)+] from Aeromonas hydrophila subsp. hydrophila (strain ATCC 7966 / DSM 30187 / BCRC 13018 / CCUG 14551 / JCM 1027 / KCTC 2358 / NCIMB 9240 / NCTC 8049).